Here is a 415-residue protein sequence, read N- to C-terminus: Serine--tRNA ligase (415 aa).

L-serine is bound at residue 231 to 233 (TAE). ATP is bound at residue 262–264 (RSE). Position 285 (glutamate 285) interacts with L-serine. 349–352 (EISS) contacts ATP. Serine 383 provides a ligand contact to L-serine.

Belongs to the class-II aminoacyl-tRNA synthetase family. Type-1 seryl-tRNA synthetase subfamily. As to quaternary structure, homodimer. The tRNA molecule binds across the dimer.

It is found in the cytoplasm. The catalysed reaction is tRNA(Ser) + L-serine + ATP = L-seryl-tRNA(Ser) + AMP + diphosphate + H(+). The enzyme catalyses tRNA(Sec) + L-serine + ATP = L-seryl-tRNA(Sec) + AMP + diphosphate + H(+). It functions in the pathway aminoacyl-tRNA biosynthesis; selenocysteinyl-tRNA(Sec) biosynthesis; L-seryl-tRNA(Sec) from L-serine and tRNA(Sec): step 1/1. Catalyzes the attachment of serine to tRNA(Ser). Is also able to aminoacylate tRNA(Sec) with serine, to form the misacylated tRNA L-seryl-tRNA(Sec), which will be further converted into selenocysteinyl-tRNA(Sec). In Helicobacter pylori (strain J99 / ATCC 700824) (Campylobacter pylori J99), this protein is Serine--tRNA ligase.